Consider the following 402-residue polypeptide: uncharacterized protein (402 aa).

This is an uncharacterized protein from Ostreid herpesvirus 1 (isolate France) (OsHV-1).